Reading from the N-terminus, the 149-residue chain is Deoxyuridine 5'-triphosphate nucleotidohydrolase (149 aa).

Substrate is bound by residues 68–70, Asn-81, and 85–87; these read RSG and LID.

It belongs to the dUTPase family. It depends on Mg(2+) as a cofactor.

It catalyses the reaction dUTP + H2O = dUMP + diphosphate + H(+). It functions in the pathway pyrimidine metabolism; dUMP biosynthesis; dUMP from dCTP (dUTP route): step 2/2. In terms of biological role, this enzyme is involved in nucleotide metabolism: it produces dUMP, the immediate precursor of thymidine nucleotides and it decreases the intracellular concentration of dUTP so that uracil cannot be incorporated into DNA. This Azoarcus sp. (strain BH72) protein is Deoxyuridine 5'-triphosphate nucleotidohydrolase.